Consider the following 328-residue polypeptide: ATP-dependent 6-phosphofructokinase (328 aa).

An ATP-binding site is contributed by Gly11. Arg21–Arg25 is a binding site for ADP. ATP-binding positions include Arg72–Ser73 and Gly102–Thr105. Mg(2+) is bound at residue Asn103. Substrate is bound at residue Thr126 to Asp128. Asp128 serves as the catalytic Proton acceptor. Arg155 serves as a coordination point for ADP. Substrate-binding positions include Arg163 and Met170–Arg172. ADP is bound by residues Gly186–Glu188 and Lys214–Ser216. Substrate is bound by residues Glu223, Arg247, and His253 to Arg256.

This sequence belongs to the phosphofructokinase type A (PFKA) family. ATP-dependent PFK group I subfamily. Prokaryotic clade 'B1' sub-subfamily. Homotetramer. The cofactor is Mg(2+).

It localises to the cytoplasm. It carries out the reaction beta-D-fructose 6-phosphate + ATP = beta-D-fructose 1,6-bisphosphate + ADP + H(+). The protein operates within carbohydrate degradation; glycolysis; D-glyceraldehyde 3-phosphate and glycerone phosphate from D-glucose: step 3/4. Its activity is regulated as follows. Allosterically activated by ADP and other diphosphonucleosides, and allosterically inhibited by phosphoenolpyruvate. Functionally, catalyzes the phosphorylation of D-fructose 6-phosphate to fructose 1,6-bisphosphate by ATP, the first committing step of glycolysis. The sequence is that of ATP-dependent 6-phosphofructokinase from Cytophaga hutchinsonii (strain ATCC 33406 / DSM 1761 / CIP 103989 / NBRC 15051 / NCIMB 9469 / D465).